The primary structure comprises 605 residues: NADH-ubiquinone oxidoreductase chain 5 (605 aa).

Helical transmembrane passes span T8–T28, I34–F54, M87–Y107, F117–L137, L140–G160, A171–F191, T241–I261, I273–L293, I301–Q321, L324–G344, L366–L386, L409–F429, L457–I477, M482–L502, and I584–F604.

This sequence belongs to the complex I subunit 5 family. Core subunit of respiratory chain NADH dehydrogenase (Complex I) which is composed of 45 different subunits.

Its subcellular location is the mitochondrion inner membrane. It carries out the reaction a ubiquinone + NADH + 5 H(+)(in) = a ubiquinol + NAD(+) + 4 H(+)(out). In terms of biological role, core subunit of the mitochondrial membrane respiratory chain NADH dehydrogenase (Complex I) which catalyzes electron transfer from NADH through the respiratory chain, using ubiquinone as an electron acceptor. Essential for the catalytic activity and assembly of complex I. The protein is NADH-ubiquinone oxidoreductase chain 5 (MT-ND5) of Rousettus amplexicaudatus (Common rousette).